Here is a 390-residue protein sequence, read N- to C-terminus: Zinc finger protein 121 (390 aa).

The C2H2-type 1; degenerate zinc-finger motif lies at 88–110 (FEYSDCEEAFVDQSHLQANRITH). Residues 116–138 (YEQKQCGRAFTYSTSHAVSVKMH) form a C2H2-type 2; degenerate zinc finger. 9 C2H2-type zinc fingers span residues 144-166 (YECKECGKFFRYSSYLNSHMRTH), 172-194 (YECKECGKCFTVSSHLVEHVRIH), 200-222 (YQCKECGRAFAGRSGLTKHVRIH), 228-250 (YECNECGKAYNRFYLLTEHFKTH), 256-278 (FECKVCGKSFRSSSCLKNHFRIH), 284-306 (YKCKECGKAFTVSSSLHNHVKIH), 312-334 (YECKDCGKAFATSSQLIEHIRTH), 340-362 (YICKECGKTFRASSHLQKHVRIH), and 368-390 (YICNECGKAYNRFYLLTKHLKTH).

This sequence belongs to the krueppel C2H2-type zinc-finger protein family.

Its subcellular location is the nucleus. Functionally, may be involved in transcriptional regulation. This Homo sapiens (Human) protein is Zinc finger protein 121 (ZNF121).